A 305-amino-acid chain; its full sequence is tRNA-cytidine(32) 2-sulfurtransferase (305 aa).

The segment at 1 to 20 is disordered; the sequence is MTAVLPLPHPLADPAPRDPR. Positions 59–64 match the PP-loop motif motif; that stretch reads SGGKDS. [4Fe-4S] cluster contacts are provided by Cys134, Cys137, and Cys225. Residues 282-293 show a composition bias toward low complexity; it reads DAPPDLAPDPGA. Residues 282–305 are disordered; that stretch reads DAPPDLAPDPGAWLTASDATHDSD.

The protein belongs to the TtcA family. As to quaternary structure, homodimer. The cofactor is Mg(2+). [4Fe-4S] cluster serves as cofactor.

It is found in the cytoplasm. The enzyme catalyses cytidine(32) in tRNA + S-sulfanyl-L-cysteinyl-[cysteine desulfurase] + AH2 + ATP = 2-thiocytidine(32) in tRNA + L-cysteinyl-[cysteine desulfurase] + A + AMP + diphosphate + H(+). Its pathway is tRNA modification. Catalyzes the ATP-dependent 2-thiolation of cytidine in position 32 of tRNA, to form 2-thiocytidine (s(2)C32). The sulfur atoms are provided by the cysteine/cysteine desulfurase (IscS) system. The sequence is that of tRNA-cytidine(32) 2-sulfurtransferase from Xanthomonas oryzae pv. oryzae (strain PXO99A).